The primary structure comprises 372 residues: Phenylalanine--tRNA ligase alpha subunit (372 aa).

Glu-276 is a Mg(2+) binding site.

This sequence belongs to the class-II aminoacyl-tRNA synthetase family. Phe-tRNA synthetase alpha subunit type 1 subfamily. As to quaternary structure, tetramer of two alpha and two beta subunits. The cofactor is Mg(2+).

Its subcellular location is the cytoplasm. It catalyses the reaction tRNA(Phe) + L-phenylalanine + ATP = L-phenylalanyl-tRNA(Phe) + AMP + diphosphate + H(+). The chain is Phenylalanine--tRNA ligase alpha subunit from Thermobifida fusca (strain YX).